Here is a 319-residue protein sequence, read N- to C-terminus: Aminoimidazole riboside kinase (319 aa).

3 residues coordinate 5-amino-1-(beta-D-ribosyl)imidazole: D16, G31, and Y101. 158-160 (DVN) is a binding site for ATP. R162 is a 5-amino-1-(beta-D-ribosyl)imidazole binding site. K(+) contacts are provided by A180, A181, and A183. K187 and E192 together coordinate ATP. Residue G213 participates in K(+) binding. 220-225 (SLGADG) serves as a coordination point for ATP. The K(+) site is built by D246 and T248. Residue D252 coordinates 5-amino-1-(beta-D-ribosyl)imidazole. Residue D252 is the Proton acceptor of the active site. Residue N281 coordinates ATP. K(+) contacts are provided by A287, A290, and G292.

The protein belongs to the carbohydrate kinase PfkB family. Homodimer.

The catalysed reaction is 5-amino-1-(beta-D-ribosyl)imidazole + ATP = 5-amino-1-(5-phospho-beta-D-ribosyl)imidazole + ADP + H(+). Its activity is regulated as follows. Potassium may regulate kinase activity. Phosphorylates 5-amino-1-(beta-D-ribosyl)imidazole (AIRs) to form 5-amino-1-(5-phospho-beta-D-ribosyl)imidazole (AIR), an important intermediate in the purine and thiamine biosynthetic pathways. It allows the use of exogenous aminoimidazole riboside (AIRs) to satisfy the cellular requirement for purines and thiamine. The chain is Aminoimidazole riboside kinase from Salmonella typhimurium (strain LT2 / SGSC1412 / ATCC 700720).